The chain runs to 99 residues: MCAPTSDDPFDIPEPKSIPAKTAASAVRFYQKYLSGLKMGSTCRFDPVCSTYALKAVSVHGAFKGTILSAARLSKCGPWHPGGFDPVPNHGFWSTETVT.

The protein belongs to the UPF0161 family.

The protein localises to the cell membrane. Its function is as follows. Could be involved in insertion of integral membrane proteins into the membrane. This is Putative membrane protein insertion efficiency factor from Corynebacterium glutamicum (strain ATCC 13032 / DSM 20300 / JCM 1318 / BCRC 11384 / CCUG 27702 / LMG 3730 / NBRC 12168 / NCIMB 10025 / NRRL B-2784 / 534).